Reading from the N-terminus, the 99-residue chain is NAD(P)H-quinone oxidoreductase subunit 4L, chloroplastic (99 aa).

The next 3 helical transmembrane spans lie at 1-21 (MFEQGLILSAYLLCVGFFGLI), 31-51 (MSLELIFNAITLNFITLSNLF), and 59-79 (IFTLFVIAVAAAEAATGLAIA).

This sequence belongs to the complex I subunit 4L family. As to quaternary structure, NDH is composed of at least 16 different subunits, 5 of which are encoded in the nucleus.

The protein resides in the plastid. Its subcellular location is the chloroplast thylakoid membrane. It carries out the reaction a plastoquinone + NADH + (n+1) H(+)(in) = a plastoquinol + NAD(+) + n H(+)(out). The enzyme catalyses a plastoquinone + NADPH + (n+1) H(+)(in) = a plastoquinol + NADP(+) + n H(+)(out). NDH shuttles electrons from NAD(P)H:plastoquinone, via FMN and iron-sulfur (Fe-S) centers, to quinones in the photosynthetic chain and possibly in a chloroplast respiratory chain. The immediate electron acceptor for the enzyme in this species is believed to be plastoquinone. Couples the redox reaction to proton translocation, and thus conserves the redox energy in a proton gradient. This Adiantum capillus-veneris (Maidenhair fern) protein is NAD(P)H-quinone oxidoreductase subunit 4L, chloroplastic.